We begin with the raw amino-acid sequence, 338 residues long: Glycerol-3-phosphate dehydrogenase [NAD(P)+] (338 aa).

NADPH is bound by residues serine 12, tryptophan 13, arginine 33, and lysine 110. Residues lysine 110, glycine 141, and serine 143 each coordinate sn-glycerol 3-phosphate. Alanine 145 lines the NADPH pocket. Residues lysine 196, aspartate 249, serine 259, arginine 260, and asparagine 261 each contribute to the sn-glycerol 3-phosphate site. Lysine 196 functions as the Proton acceptor in the catalytic mechanism. Residue arginine 260 coordinates NADPH. Residues valine 284 and glutamate 286 each coordinate NADPH.

This sequence belongs to the NAD-dependent glycerol-3-phosphate dehydrogenase family.

Its subcellular location is the cytoplasm. It catalyses the reaction sn-glycerol 3-phosphate + NAD(+) = dihydroxyacetone phosphate + NADH + H(+). It carries out the reaction sn-glycerol 3-phosphate + NADP(+) = dihydroxyacetone phosphate + NADPH + H(+). The protein operates within membrane lipid metabolism; glycerophospholipid metabolism. Catalyzes the reduction of the glycolytic intermediate dihydroxyacetone phosphate (DHAP) to sn-glycerol 3-phosphate (G3P), the key precursor for phospholipid synthesis. In Limosilactobacillus reuteri (strain DSM 20016) (Lactobacillus reuteri), this protein is Glycerol-3-phosphate dehydrogenase [NAD(P)+].